We begin with the raw amino-acid sequence, 265 residues long: 3-methyl-2-oxobutanoate hydroxymethyltransferase (265 aa).

Mg(2+) contacts are provided by aspartate 44 and aspartate 83. Residues 44-45 (DS), aspartate 83, and lysine 113 each bind 3-methyl-2-oxobutanoate. Mg(2+) is bound at residue glutamate 115. The active-site Proton acceptor is glutamate 183.

Belongs to the PanB family. Homodecamer; pentamer of dimers. It depends on Mg(2+) as a cofactor.

The protein localises to the cytoplasm. It carries out the reaction 3-methyl-2-oxobutanoate + (6R)-5,10-methylene-5,6,7,8-tetrahydrofolate + H2O = 2-dehydropantoate + (6S)-5,6,7,8-tetrahydrofolate. It participates in cofactor biosynthesis; (R)-pantothenate biosynthesis; (R)-pantoate from 3-methyl-2-oxobutanoate: step 1/2. Catalyzes the reversible reaction in which hydroxymethyl group from 5,10-methylenetetrahydrofolate is transferred onto alpha-ketoisovalerate to form ketopantoate. In Leptospira borgpetersenii serovar Hardjo-bovis (strain L550), this protein is 3-methyl-2-oxobutanoate hydroxymethyltransferase.